The chain runs to 425 residues: 3-phosphoshikimate 1-carboxyvinyltransferase (425 aa).

3 residues coordinate 3-phosphoshikimate: Lys21, Ser22, and Arg26. Lys21 serves as a coordination point for phosphoenolpyruvate. Gly91 and Arg119 together coordinate phosphoenolpyruvate. 3-phosphoshikimate is bound by residues Ser164, Gln166, Asp311, and Lys338. Position 166 (Gln166) interacts with phosphoenolpyruvate. The active-site Proton acceptor is the Asp311. Phosphoenolpyruvate is bound by residues Arg342 and Arg383.

The protein belongs to the EPSP synthase family. In terms of assembly, monomer.

It localises to the cytoplasm. The enzyme catalyses 3-phosphoshikimate + phosphoenolpyruvate = 5-O-(1-carboxyvinyl)-3-phosphoshikimate + phosphate. The protein operates within metabolic intermediate biosynthesis; chorismate biosynthesis; chorismate from D-erythrose 4-phosphate and phosphoenolpyruvate: step 6/7. In terms of biological role, catalyzes the transfer of the enolpyruvyl moiety of phosphoenolpyruvate (PEP) to the 5-hydroxyl of shikimate-3-phosphate (S3P) to produce enolpyruvyl shikimate-3-phosphate and inorganic phosphate. The chain is 3-phosphoshikimate 1-carboxyvinyltransferase from Campylobacter fetus subsp. fetus (strain 82-40).